We begin with the raw amino-acid sequence, 316 residues long: Beta-ketoacyl-[acyl-carrier-protein] synthase III (316 aa).

Catalysis depends on residues cysteine 112 and histidine 243. Residues 244–248 (QANLR) are ACP-binding. Asparagine 273 is an active-site residue.

Belongs to the thiolase-like superfamily. FabH family. Homodimer.

Its subcellular location is the cytoplasm. The enzyme catalyses malonyl-[ACP] + acetyl-CoA + H(+) = 3-oxobutanoyl-[ACP] + CO2 + CoA. It functions in the pathway lipid metabolism; fatty acid biosynthesis. In terms of biological role, catalyzes the condensation reaction of fatty acid synthesis by the addition to an acyl acceptor of two carbons from malonyl-ACP. Catalyzes the first condensation reaction which initiates fatty acid synthesis and may therefore play a role in governing the total rate of fatty acid production. Possesses both acetoacetyl-ACP synthase and acetyl transacylase activities. Its substrate specificity determines the biosynthesis of branched-chain and/or straight-chain of fatty acids. This is Beta-ketoacyl-[acyl-carrier-protein] synthase III from Yersinia pestis (strain Pestoides F).